A 315-amino-acid polypeptide reads, in one-letter code: MNQLESLKQFTTVVADTGDFRQLGQFKPQDATTNPSLILKAVQKADYQPLLKETVARFKGRALDEVMDRLLVRFGCEILSIIPGRVSTEVDARLSFDANASYTRGERIVELYQAEGIHIDRVLIKVAATWEGIQAAERLERRGIHTNLTLLFSFCQAVACGQARVQLISPFVGRIYDWYKKSAGAAWDEAANAGANDPGVKSVRQIYNHYKHFGIATEVMGASFRNAGQITALAGCDLLTISPELLAQLAASEAPLARSLDAGAARSLDLPAVNYDETGFRYALNEDAMATEKLAEGIRAFAADAIKLEQLMVAA.

Lys125 acts as the Schiff-base intermediate with substrate in catalysis.

This sequence belongs to the transaldolase family. Type 1 subfamily. In terms of assembly, homodimer.

Its subcellular location is the cytoplasm. The enzyme catalyses D-sedoheptulose 7-phosphate + D-glyceraldehyde 3-phosphate = D-erythrose 4-phosphate + beta-D-fructose 6-phosphate. It participates in carbohydrate degradation; pentose phosphate pathway; D-glyceraldehyde 3-phosphate and beta-D-fructose 6-phosphate from D-ribose 5-phosphate and D-xylulose 5-phosphate (non-oxidative stage): step 2/3. Transaldolase is important for the balance of metabolites in the pentose-phosphate pathway. The chain is Transaldolase from Polaromonas sp. (strain JS666 / ATCC BAA-500).